We begin with the raw amino-acid sequence, 146 residues long: Large ribosomal subunit protein uL15 (146 aa).

The tract at residues 1–52 (MKLSNLSPKAGSKKRRRRVGRGIAAGQGASCGFGMRGQKSRSGTGTKAGFEG) is disordered. A compositionally biased stretch (basic residues) spans 11–20 (GSKKRRRRVG). The span at 23–35 (IAAGQGASCGFGM) shows a compositional bias: gly residues.

Belongs to the universal ribosomal protein uL15 family. As to quaternary structure, part of the 50S ribosomal subunit.

Functionally, binds to the 23S rRNA. The polypeptide is Large ribosomal subunit protein uL15 (Picosynechococcus sp. (strain ATCC 27264 / PCC 7002 / PR-6) (Agmenellum quadruplicatum)).